Consider the following 361-residue polypeptide: Mitochondrial fission regulator 2 (361 aa).

S137 is modified (phosphoserine). Disordered regions lie at residues 191–286 (FIDL…VPNM) and 298–322 (LRPV…EWDP). Over residues 219 to 231 (VLPPPPPPPPPPQ) the composition is skewed to pro residues. The segment covering 232-244 (FSLQPPSSLPMQP) has biased composition (low complexity). A compositionally biased stretch (basic and acidic residues) spans 250–282 (HDIDSLATEMERQLSGVKKTDDSHHSKSQRLRD). S304 and S340 each carry phosphoserine.

It belongs to the MTFR1 family. As to expression, expressed predominantly in testis (at protein level). Expressed to a lower extent in spleen.

It localises to the mitochondrion. May play a role in mitochondrial aerobic respiration essentially in the testis. Can also promote mitochondrial fission. This Mus musculus (Mouse) protein is Mitochondrial fission regulator 2 (Mtfr2).